A 598-amino-acid polypeptide reads, in one-letter code: Probable polysaccharide biosynthesis protein EpsC (598 aa).

4 helical membrane passes run 1 to 21 (MIIA…YQFL), 31 to 51 (GALL…AFLF), 63 to 83 (LGEL…TGVI), and 87 to 107 (VYHT…LLSI).

The protein belongs to the polysaccharide synthase family.

Its subcellular location is the cell membrane. Its function is as follows. Involved in biofilm formation. This Bacillus subtilis (strain 168) protein is Probable polysaccharide biosynthesis protein EpsC (epsC).